The sequence spans 257 residues: Imidazole glycerol phosphate synthase subunit HisF (257 aa).

Active-site residues include aspartate 11 and aspartate 130.

The protein belongs to the HisA/HisF family. In terms of assembly, heterodimer of HisH and HisF.

It localises to the cytoplasm. The catalysed reaction is 5-[(5-phospho-1-deoxy-D-ribulos-1-ylimino)methylamino]-1-(5-phospho-beta-D-ribosyl)imidazole-4-carboxamide + L-glutamine = D-erythro-1-(imidazol-4-yl)glycerol 3-phosphate + 5-amino-1-(5-phospho-beta-D-ribosyl)imidazole-4-carboxamide + L-glutamate + H(+). Its pathway is amino-acid biosynthesis; L-histidine biosynthesis; L-histidine from 5-phospho-alpha-D-ribose 1-diphosphate: step 5/9. In terms of biological role, IGPS catalyzes the conversion of PRFAR and glutamine to IGP, AICAR and glutamate. The HisF subunit catalyzes the cyclization activity that produces IGP and AICAR from PRFAR using the ammonia provided by the HisH subunit. This chain is Imidazole glycerol phosphate synthase subunit HisF, found in Aeromonas hydrophila subsp. hydrophila (strain ATCC 7966 / DSM 30187 / BCRC 13018 / CCUG 14551 / JCM 1027 / KCTC 2358 / NCIMB 9240 / NCTC 8049).